We begin with the raw amino-acid sequence, 44 residues long: U4-ctenitoxin-Pk1a (44 aa).

5 cysteine pairs are disulfide-bonded: cysteine 4-cysteine 18, cysteine 11-cysteine 24, cysteine 15-cysteine 42, cysteine 17-cysteine 33, and cysteine 26-cysteine 31.

As to expression, expressed by the venom gland.

The protein localises to the secreted. Neurotoxin. Causes spastic paralysis and death in mice within 10 minutes at dose levels of 3 ug per mouse. This is U4-ctenitoxin-Pk1a from Phoneutria keyserlingi (Brazilian wandering spider).